Here is a 267-residue protein sequence, read N- to C-terminus: Orotidine 5'-phosphate decarboxylase (267 aa).

Residues Asp-37, 59–61 (KTH), 91–100 (DRKFADIGNT), Tyr-217, and Arg-235 each bind substrate. The active-site Proton donor is the Lys-93.

It belongs to the OMP decarboxylase family.

The enzyme catalyses orotidine 5'-phosphate + H(+) = UMP + CO2. It participates in pyrimidine metabolism; UMP biosynthesis via de novo pathway; UMP from orotate: step 2/2. The sequence is that of Orotidine 5'-phosphate decarboxylase (URA3) from Kluyveromyces marxianus (Yeast).